The sequence spans 229 residues: MKGLVQFLVAKIILLVLASTFVHCYDPNPLQDYCVATNGTNRVFVNGKFCKDPKLVTANDFFYSGLNIPGNTSNRLGASVTDVDVRRIPGLNTLGIAIARLDFAPGGQLPPHIHPRASQIILVLKGQLSVGFVSSNDYNYTLFSKILYPGDVFAFPIGLVQFHANTGKTHAVAIGVVGSQDPGVIPIGDAVFGSNPLIDPKLLAKAFALDVNIVRHVQRVFSSEGYIVK.

A signal peptide spans 1-24 (MKGLVQFLVAKIILLVLASTFVHC). Cys-34 and Cys-50 are joined by a disulfide. Residues Asn-38 and Asn-71 are each glycosylated (N-linked (GlcNAc...) asparagine). Positions 64–215 (SGLNIPGNTS…AFALDVNIVR (152 aa)) constitute a Cupin type-1 domain. Mn(2+) is bound by residues His-112 and His-114. Asn-139 carries N-linked (GlcNAc...) asparagine glycosylation. Residue His-163 coordinates Mn(2+).

It belongs to the germin family. Oligomer (believed to be a pentamer but probably hexamer).

The protein resides in the secreted. The protein localises to the extracellular space. It localises to the apoplast. May play a role in plant defense. Probably has no oxalate oxidase activity even if the active site is conserved. The chain is Putative germin-like protein subfamily 1 member 2 from Arabidopsis thaliana (Mouse-ear cress).